We begin with the raw amino-acid sequence, 437 residues long: Enolase 2 (437 aa).

Q162 serves as a coordination point for (2R)-2-phosphoglycerate. E204 functions as the Proton donor in the catalytic mechanism. Positions 251, 297, and 324 each coordinate Mg(2+). 4 residues coordinate (2R)-2-phosphoglycerate: K349, R378, S379, and K400. K349 functions as the Proton acceptor in the catalytic mechanism.

The protein belongs to the enolase family. Mg(2+) serves as cofactor.

It localises to the cytoplasm. The protein localises to the secreted. The protein resides in the cell surface. The catalysed reaction is (2R)-2-phosphoglycerate = phosphoenolpyruvate + H2O. The protein operates within carbohydrate degradation; glycolysis; pyruvate from D-glyceraldehyde 3-phosphate: step 4/5. Catalyzes the reversible conversion of 2-phosphoglycerate (2-PG) into phosphoenolpyruvate (PEP). It is essential for the degradation of carbohydrates via glycolysis. The sequence is that of Enolase 2 from Chlorobaculum tepidum (strain ATCC 49652 / DSM 12025 / NBRC 103806 / TLS) (Chlorobium tepidum).